The chain runs to 614 residues: UvrABC system protein C (614 aa).

Positions 14-91 constitute a GIY-YIG domain; sequence TSPGCYIHKD…IKENKPKYNI (78 aa). The 36-residue stretch at 196–231 folds into the UVR domain; the sequence is DKIIDDLKSKMAVAAQSMEFERAAEYRDLIQAIGTL. The segment at 595 to 614 is disordered; it reads LPQVAEERVDYQTEGNHNEP. A compositionally biased stretch (basic and acidic residues) spans 599-614; sequence AEERVDYQTEGNHNEP.

It belongs to the UvrC family. Interacts with UvrB in an incision complex.

The protein localises to the cytoplasm. Its function is as follows. The UvrABC repair system catalyzes the recognition and processing of DNA lesions. UvrC both incises the 5' and 3' sides of the lesion. The N-terminal half is responsible for the 3' incision and the C-terminal half is responsible for the 5' incision. The protein is UvrABC system protein C of Streptococcus pneumoniae serotype 4 (strain ATCC BAA-334 / TIGR4).